Consider the following 500-residue polypeptide: Probable glycine dehydrogenase (decarboxylating) subunit 2 (500 aa).

An N6-(pyridoxal phosphate)lysine modification is found at Lys-273.

Belongs to the GcvP family. C-terminal subunit subfamily. As to quaternary structure, the glycine cleavage system is composed of four proteins: P, T, L and H. In this organism, the P 'protein' is a heterodimer of two subunits. It depends on pyridoxal 5'-phosphate as a cofactor.

The enzyme catalyses N(6)-[(R)-lipoyl]-L-lysyl-[glycine-cleavage complex H protein] + glycine + H(+) = N(6)-[(R)-S(8)-aminomethyldihydrolipoyl]-L-lysyl-[glycine-cleavage complex H protein] + CO2. In terms of biological role, the glycine cleavage system catalyzes the degradation of glycine. The P protein binds the alpha-amino group of glycine through its pyridoxal phosphate cofactor; CO(2) is released and the remaining methylamine moiety is then transferred to the lipoamide cofactor of the H protein. The polypeptide is Probable glycine dehydrogenase (decarboxylating) subunit 2 (Rhodopirellula baltica (strain DSM 10527 / NCIMB 13988 / SH1)).